Here is a 75-residue protein sequence, read N- to C-terminus: Small ribosomal subunit protein bS18 (75 aa).

This sequence belongs to the bacterial ribosomal protein bS18 family. Part of the 30S ribosomal subunit. Forms a tight heterodimer with protein bS6.

In terms of biological role, binds as a heterodimer with protein bS6 to the central domain of the 16S rRNA, where it helps stabilize the platform of the 30S subunit. This is Small ribosomal subunit protein bS18 from Glaesserella parasuis serovar 5 (strain SH0165) (Haemophilus parasuis).